Reading from the N-terminus, the 239-residue chain is uncharacterized protein (239 aa).

Transmembrane regions (helical) follow at residues 30 to 50 (VALL…IELI), 76 to 96 (LYLG…IFII), 107 to 127 (LIPI…FGYI), 157 to 177 (FIIL…FQIL), 188 to 208 (MMLS…AIIT), and 214 to 234 (LIQL…ILVL).

Belongs to the TatC family.

It localises to the plastid. Its subcellular location is the chloroplast membrane. This is an uncharacterized protein from Cyanidium caldarium (Red alga).